The chain runs to 131 residues: Arsenate reductase (131 aa).

Catalysis depends on nucleophile residues C10, C82, and C89. 2 disulfides stabilise this stretch: C10/C82 and C82/C89.

This sequence belongs to the low molecular weight phosphotyrosine protein phosphatase family. Thioredoxin-coupled ArsC subfamily.

The protein resides in the cytoplasm. It carries out the reaction arsenate + [thioredoxin]-dithiol + H(+) = arsenite + [thioredoxin]-disulfide + H2O. Catalyzes the reduction of arsenate [As(V)] to arsenite [As(III)]. This Staphylococcus aureus (strain N315) protein is Arsenate reductase.